We begin with the raw amino-acid sequence, 141 residues long: Large ribosomal subunit protein uL11 (141 aa).

Belongs to the universal ribosomal protein uL11 family. As to quaternary structure, part of the ribosomal stalk of the 50S ribosomal subunit. Interacts with L10 and the large rRNA to form the base of the stalk. L10 forms an elongated spine to which L12 dimers bind in a sequential fashion forming a multimeric L10(L12)X complex. One or more lysine residues are methylated.

Its function is as follows. Forms part of the ribosomal stalk which helps the ribosome interact with GTP-bound translation factors. In Sulfurimonas denitrificans (strain ATCC 33889 / DSM 1251) (Thiomicrospira denitrificans (strain ATCC 33889 / DSM 1251)), this protein is Large ribosomal subunit protein uL11.